A 183-amino-acid polypeptide reads, in one-letter code: uncharacterized protein (183 aa).

Over residues 105-149 the composition is skewed to low complexity; it reads YNTNNSNTNTNYNNNNNNNNNNNNNNNNNNNKNNNNNNNNNNSNS. Residues 105–151 are disordered; sequence YNTNNSNTNTNYNNNNNNNNNNNNNNNNNNNKNNNNNNNNNNSNSKI.

This is an uncharacterized protein from Dictyostelium discoideum (Social amoeba).